The chain runs to 895 residues: Serine/threonine-protein kinase-like protein ACR4 (895 aa).

An N-terminal signal peptide occupies residues 1-29 (MRMFETRAREWILLVKLVLFTSIWQLASA). Topologically, residues 30 to 434 (LGSMSSIAIS…FWSLQLPIAT (405 aa)) are extracellular. A run of 7 repeats spans residues 38–73 (ISYG…GTPG), 77–112 (FIGL…GVPQ), 130–167 (LCGL…VFDK), 169–202 (LHSL…QVIS), 210–245 (FQKI…EEVT), 262–296 (LLAV…TPAP), and 301–339 (FYDL…AVSP). A 7 X 36 AA repeats region spans residues 38–339 (ISYGEGGSVF…PASIPLAVSP (302 aa)). Asn158 and Asn196 each carry an N-linked (GlcNAc...) asparagine glycan. Asn290 is a glycosylation site (N-linked (GlcNAc...) asparagine). The stretch at 346–395 (PCPPGTHELSNQENSPCKFTGSHICLPCSTSCPPGMYQKSVCTERSDQVC) is one TNFR-Cys repeat. 3 disulfides stabilise this stretch: Cys347–Cys370, Cys373–Cys387, and Cys377–Cys395. 2 N-linked (GlcNAc...) asparagine glycosylation sites follow: Asn398 and Asn410. A helical transmembrane segment spans residues 435-455 (AEIGFALFLVAVVSITAALYI). Topologically, residues 456–895 (RYRLRNCRCS…GQSLFLHHNF (440 aa)) are cytoplasmic. Position 475 is a phosphoserine (Ser475). One can recognise a Protein kinase domain in the interval 512 to 789 (FKEESIVGKG…KVTTALERAL (278 aa)). ATP is bound by residues 518–526 (VGKGSFSCV) and Lys540. The active-site Proton acceptor is Asp641. Residues 818-895 (SWRIGSKRSG…GQSLFLHHNF (78 aa)) are disordered. Residues 865-877 (EGRKQQEALRSLE) are compositionally biased toward basic and acidic residues.

This sequence belongs to the protein kinase superfamily. Ser/Thr protein kinase family. Homodimer. Interacts with PP2A3. Post-translationally, autophosphorylated and phosphorylated by ALE2. Expressed in seedlings, floral buds, siliques, leaves, shoot apical meristems (SAM), and, to a lower extent, in roots.

The protein localises to the cell membrane. It localises to the endosome. Its subcellular location is the multivesicular body membrane. It catalyses the reaction L-seryl-[protein] + ATP = O-phospho-L-seryl-[protein] + ADP + H(+). The catalysed reaction is L-threonyl-[protein] + ATP = O-phospho-L-threonyl-[protein] + ADP + H(+). Functionally, controls formative cell division in meristems, including root tips and lateral root initiation zones of the pericycle, in response to CLE40 signal. Acts with CLE40p peptide as a ligand-receptor pair in a signal transduction pathway, coordinating movement of the root tip and organization of cell divisions in the root meristem. Required during embryogenesis and development, probably for the differentiation of protoderm and epidermal cells. Involved in the regulation of cellular organization during the development of sepal margins and ovule integument outgrowth and promotes giant cell formation. Can phosphorylate ALE2. This chain is Serine/threonine-protein kinase-like protein ACR4, found in Arabidopsis thaliana (Mouse-ear cress).